A 400-amino-acid chain; its full sequence is MGGWSSKPRKGMGTNLSVPNPLGFFPDHQLDPAFGANSNNPDWDFNPVKDDWPAANQVGVGAFGPRLTPPHGGILGWSPQAQGILTTVSTIPPPASTNRQSGRQPTPISPPLRDSHPQAMQWNSTAFHQTLQDPRVRGLYLPAGGSSSGTVNPAPNIASHISSISARTGDPVTNMENITSGFLGPLLVLQAGFFLLTRILTIPQSLDSWWTSLNFLGGSPVCLGQNSQSPTSNHSPTSCPPICPGYRWMCLRRFIIFLFILLLCLIFLLVLLDYQGMLPVCPLIPGSTTTSTGPCKTCTTPAQGNSMFPSCCCTKPTDGNCTCIPIPSSWAFAKYLWEWASVRFSWLSLLVPFVQWFVGLSPTVWLSAIWMMWYWGPSLYSIVSPFIPLLPIFFCLWVYI.

Position 1 is an N-acetylmethionine (Met1). Disordered regions lie at residues 1-20 and 89-115; these read MGGW…SVPN and STIP…LRDS. The N-myristoyl glycine; by host moiety is linked to residue Gly2. A pre-S1 region spans residues 2–119; the sequence is GGWSSKPRKG…PPLRDSHPQA (118 aa). A pre-S region spans residues 2 to 174; that stretch reads GGWSSKPRKG…SARTGDPVTN (173 aa). At 2 to 181 the chain is on the virion surface; in external conformation side; sequence GGWSSKPRKG…VTNMENITSG (180 aa). Residues 2–253 are Intravirion; in internal conformation-facing; that stretch reads GGWSSKPRKG…PGYRWMCLRR (252 aa). N-linked (GlcNAc...) asparagine glycosylation is present at Trp4. Positions 89–106 are enriched in polar residues; the sequence is STIPPPASTNRQSGRQPT. Positions 120-174 are pre-S2; sequence MQWNSTAFHQTLQDPRVRGLYLPAGGSSSGTVNPAPNIASHISSISARTGDPVTN. A helical membrane pass occupies residues 182–202; the sequence is FLGPLLVLQAGFFLLTRILTI. Residues 203-253 lie on the Intravirion; in external conformation side of the membrane; it reads PQSLDSWWTSLNFLGGSPVCLGQNSQSPTSNHSPTSCPPICPGYRWMCLRR. A helical transmembrane segment spans residues 254-274; sequence FIIFLFILLLCLIFLLVLLDY. Residues 275–348 lie on the Virion surface side of the membrane; it reads QGMLPVCPLI…WASVRFSWLS (74 aa). The N-linked (GlcNAc...) asparagine; by host; partial glycan is linked to Asn320. The helical transmembrane segment at 349 to 369 threads the bilayer; the sequence is LLVPFVQWFVGLSPTVWLSAI. Over 370 to 375 the chain is Intravirion; sequence WMMWYW. Residues 376-398 traverse the membrane as a helical segment; sequence GPSLYSIVSPFIPLLPIFFCLWV. The Virion surface segment spans residues 399-400; the sequence is YI.

It belongs to the orthohepadnavirus major surface antigen family. As to quaternary structure, in its internal form (Li-HBsAg), interacts with the capsid protein and with the isoform S. Interacts with host chaperone CANX. Associates with host chaperone CANX through its pre-S2 N glycan; this association may be essential for isoform M proper secretion. In terms of assembly, interacts with isoform L. Interacts with the antigens of satellite virus HDV (HDVAgs); this interaction is required for encapsidation of HDV genomic RNA. Isoform M is N-terminally acetylated by host at a ratio of 90%, and N-glycosylated by host at the pre-S2 region. Post-translationally, myristoylated.

It is found in the virion membrane. In terms of biological role, the large envelope protein exists in two topological conformations, one which is termed 'external' or Le-HBsAg and the other 'internal' or Li-HBsAg. In its external conformation the protein attaches the virus to cell receptors and thereby initiating infection. This interaction determines the species specificity and liver tropism. This attachment induces virion internalization predominantly through caveolin-mediated endocytosis. The large envelope protein also assures fusion between virion membrane and endosomal membrane. In its internal conformation the protein plays a role in virion morphogenesis and mediates the contact with the nucleocapsid like a matrix protein. Its function is as follows. The middle envelope protein plays an important role in the budding of the virion. It is involved in the induction of budding in a nucleocapsid independent way. In this process the majority of envelope proteins bud to form subviral lipoprotein particles of 22 nm of diameter that do not contain a nucleocapsid. In Hepatitis B virus genotype A2 subtype adw2 (strain Rutter 1979) (HBV-A), this protein is Large envelope protein.